The sequence spans 450 residues: Trehalose/maltose-binding protein MalE (450 aa).

Positions 1-24 (MNVKKVLLGLFLVGVLGIAVVASG) are cleaved as a signal peptide. Positions 57, 84, 89, 110, 161, 163, 217, 279, 297, 299, 334, 335, 371, and 404 each coordinate alpha,alpha-trehalose.

This sequence belongs to the bacterial solute-binding protein 1 family. As to quaternary structure, the complex is composed of two ATP-binding proteins (MalK), two transmembrane proteins (MalG and MalF) and a solute-binding protein (MalE). In terms of processing, glycosylated.

The protein localises to the cell membrane. Part of the ABC transporter complex MalEFGK involved in trehalose/maltose import. Binds maltose and trehalose. The sequence is that of Trehalose/maltose-binding protein MalE (malE) from Thermococcus litoralis (strain ATCC 51850 / DSM 5473 / JCM 8560 / NS-C).